The sequence spans 64 residues: Large ribosomal subunit protein bL33 (64 aa).

Basic and acidic residues predominate over residues 16-25; that stretch reads EARTSSEPRR. The disordered stretch occupies residues 16–41; that stretch reads EARTSSEPRRSNGVSRYTTEKNKRNT.

It belongs to the bacterial ribosomal protein bL33 family.

The sequence is that of Large ribosomal subunit protein bL33 from Prochlorococcus marinus subsp. pastoris (strain CCMP1986 / NIES-2087 / MED4).